The chain runs to 379 residues: uncharacterized protein (379 aa).

The protein belongs to the glycosyltransferase 28 family.

This is an uncharacterized protein from Methanosarcina mazei (strain ATCC BAA-159 / DSM 3647 / Goe1 / Go1 / JCM 11833 / OCM 88) (Methanosarcina frisia).